The primary structure comprises 363 residues: Peptide chain release factor 1 (363 aa).

At Q237 the chain carries N5-methylglutamine. Residues E284 to R296 are compositionally biased toward basic and acidic residues. The tract at residues E284–R305 is disordered.

Belongs to the prokaryotic/mitochondrial release factor family. Methylated by PrmC. Methylation increases the termination efficiency of RF1.

It localises to the cytoplasm. Its function is as follows. Peptide chain release factor 1 directs the termination of translation in response to the peptide chain termination codons UAG and UAA. The protein is Peptide chain release factor 1 of Shewanella baltica (strain OS195).